The sequence spans 135 residues: Antennal-specific protein OS-C (135 aa).

An N-terminal signal peptide occupies residues 1 to 27 (MGFHMGRQLLLSGFLLVMLQMVTQTQA). Residues 43 to 84 (VIKREGDDDGDDDDSSSEETVEDSEESRRRRREVNTDNTPSA) are disordered. The span at 49–67 (DDDGDDDDSSSEETVEDSE) shows a compositional bias: acidic residues.

As to expression, antenna. In the third antennal segment. Expressed in sencilla coeloconica.

This Drosophila melanogaster (Fruit fly) protein is Antennal-specific protein OS-C (Os-C).